The primary structure comprises 224 residues: Claudin-19 (224 aa).

Topologically, residues 1 to 7 are cytoplasmic; it reads MANSGLQ. A helical transmembrane segment spans residues 8 to 28; it reads LLGYFLALGGWVGIIASTALP. Residues 29 to 81 lie on the Extracellular side of the membrane; it reads QWKQSSYAGDAIITAVGLYEGLWMSCASQSTGQVQCKLYDSLLALDGHIQSAR. Cys54 and Cys64 are joined by a disulfide. A helical membrane pass occupies residues 82–102; it reads ALMVVAVLLGFVAMVLSVVGM. Residues 103-117 lie on the Cytoplasmic side of the membrane; that stretch reads KCTRVGDSNPTAKSR. A helical transmembrane segment spans residues 118-138; sequence VAISGGALFLLAGLCTLTAVS. Residues 139–160 are Extracellular-facing; the sequence is WYATLVTQEFFNPSTPVNARYE. The chain crosses the membrane as a helical span at residues 161–181; it reads FGPALFVGWASAGLAMLGGSF. Over 182–224 the chain is Cytoplasmic; the sequence is LCCTCPEPERANSIPQPYRSGPSTAAREPVVKLPASVKGPLGV.

The protein belongs to the claudin family. In terms of assembly, can form homo- and heteropolymeric tight junction strands. Interacts with other claudins including CLDN3, CLDN10, CLDN16 and CLDN18 with highest affinity for CLDN16. Interacts (via PDZ-binding motif TRV) with TJP1 (via PDZ domain). As to quaternary structure, (Microbial infection) Interacts (via both extracellular domains) with Clostridium perfringens enterotoxin CPE; the interaction disrupts claudin assembly in tight junctions. Expressed in the corticomedullary axis of the TAL, specifically in the cortex and the outer stripe of outer medulla (OSOM) zone (at protein level). Expressed in peripheral nervous system, in Schwan cells (at protein level).

It is found in the cell junction. The protein localises to the tight junction. Its subcellular location is the cell membrane. The catalysed reaction is Mg(2+)(in) = Mg(2+)(out). It catalyses the reaction Ca(2+)(in) = Ca(2+)(out). It carries out the reaction Na(+)(in) = Na(+)(out). The enzyme catalyses K(+)(in) = K(+)(out). The catalysed reaction is Rb(+)(in) = Rb(+)(out). It catalyses the reaction Cs(+)(in) = Cs(+)(out). It carries out the reaction Li(+)(in) = Li(+)(out). Forms paracellular channels: coassembles with CLDN16 into tight junction strands with cation-selective channels through the strands, conveying epithelial permeability in a process known as paracellular tight junction permeability. Involved in the maintenance of ion gradients along the nephron. In the thick ascending limb (TAL) of Henle's loop, facilitates sodium paracellular permeability from the interstitial compartment to the lumen, contributing to the lumen-positive transepithelial potential that drives paracellular magnesium and calcium reabsorption. Forms paracellular barriers on its own. In the peripheral nervous system, represents a major constituent of the tight junctions in Schwann cells and contributes to electrical sealing. During retinal neurogenesis, may regulate the barrier properties of tight junctions in retinal pigment epithelium, required for proper retinal tissue differentiation and vision. This Mus musculus (Mouse) protein is Claudin-19.